A 438-amino-acid polypeptide reads, in one-letter code: V-type ATP synthase beta chain (438 aa).

It belongs to the ATPase alpha/beta chains family.

Functionally, produces ATP from ADP in the presence of a proton gradient across the membrane. The V-type beta chain is a regulatory subunit. The polypeptide is V-type ATP synthase beta chain (Chlamydia felis (strain Fe/C-56) (Chlamydophila felis)).